A 331-amino-acid chain; its full sequence is 6-phosphogluconolactonase (331 aa).

The protein belongs to the cycloisomerase 2 family.

It carries out the reaction 6-phospho-D-glucono-1,5-lactone + H2O = 6-phospho-D-gluconate + H(+). It participates in carbohydrate degradation; pentose phosphate pathway; D-ribulose 5-phosphate from D-glucose 6-phosphate (oxidative stage): step 2/3. In terms of biological role, catalyzes the hydrolysis of 6-phosphogluconolactone to 6-phosphogluconate. In Salmonella agona (strain SL483), this protein is 6-phosphogluconolactonase.